The following is a 119-amino-acid chain: Large ribosomal subunit protein bL20 (119 aa).

It belongs to the bacterial ribosomal protein bL20 family.

Binds directly to 23S ribosomal RNA and is necessary for the in vitro assembly process of the 50S ribosomal subunit. It is not involved in the protein synthesizing functions of that subunit. The polypeptide is Large ribosomal subunit protein bL20 (Geobacillus thermodenitrificans (strain NG80-2)).